The chain runs to 385 residues: MRLGVSLLGSTGSIGRQTLEVVAAHPDRFRVVALAARSQIDALQEQVRIFRPELVAIAQESLGISFPDTRVVSGPGGLVEAATYETADIVVIALSGNSGIEPTLAAAAAGKTIALANKESVVCAGPLLRDIQSRTGCQVRPVDSEHSALWQLLQLPHRPAEIARVILTASGGPFRDRPLEHLNQVTPDEALAHPTWRMGPKITIDSATLLNKGLELIEAHWLFDLPFERLDVVIHPQSIVHALLAFVDGTTVAHAAYPDMRLPIQYALFYPERVASTVPPLDLARIGPLEFFPPDTERFPALPLAREVGIAGSTYPTVLCAADEIAVEAFLAGQIRFTEIVPLIRSVLDRHQPASEPLTLEAILAADRWARSVARELVGRAIRHA.

The NADPH site is built by T11, G12, S13, I14, Q39, and N117. K118 contacts 1-deoxy-D-xylulose 5-phosphate. E119 is a binding site for NADPH. Residue D143 participates in Mn(2+) binding. Residues S144, E145, S170, and H193 each contribute to the 1-deoxy-D-xylulose 5-phosphate site. E145 provides a ligand contact to Mn(2+). G199 provides a ligand contact to NADPH. 1-deoxy-D-xylulose 5-phosphate is bound by residues S206, N211, K212, and E215. E215 contacts Mn(2+).

The protein belongs to the DXR family. It depends on Mg(2+) as a cofactor. Requires Mn(2+) as cofactor.

It carries out the reaction 2-C-methyl-D-erythritol 4-phosphate + NADP(+) = 1-deoxy-D-xylulose 5-phosphate + NADPH + H(+). The protein operates within isoprenoid biosynthesis; isopentenyl diphosphate biosynthesis via DXP pathway; isopentenyl diphosphate from 1-deoxy-D-xylulose 5-phosphate: step 1/6. Catalyzes the NADPH-dependent rearrangement and reduction of 1-deoxy-D-xylulose-5-phosphate (DXP) to 2-C-methyl-D-erythritol 4-phosphate (MEP). The chain is 1-deoxy-D-xylulose 5-phosphate reductoisomerase from Thermomicrobium roseum (strain ATCC 27502 / DSM 5159 / P-2).